The chain runs to 712 residues: Polyribonucleotide nucleotidyltransferase (712 aa).

Mg(2+) contacts are provided by D487 and D493. A KH domain is found at 554–613 (PRIHTMKISVEKIKDVIGKGGAVIRQLTEETGTTIEIEDDGTIKIAATDGDQAKEAIRRI). An S1 motif domain is found at 623–691 (GVIYTGKVAR…RQGRVRLSMK (69 aa)).

Belongs to the polyribonucleotide nucleotidyltransferase family. Component of the RNA degradosome, which is a multiprotein complex involved in RNA processing and mRNA degradation. Requires Mg(2+) as cofactor.

It localises to the cytoplasm. The catalysed reaction is RNA(n+1) + phosphate = RNA(n) + a ribonucleoside 5'-diphosphate. Involved in mRNA degradation. Catalyzes the phosphorolysis of single-stranded polyribonucleotides processively in the 3'- to 5'-direction. The chain is Polyribonucleotide nucleotidyltransferase from Vibrio cholerae serotype O1 (strain ATCC 39541 / Classical Ogawa 395 / O395).